The chain runs to 431 residues: Adenylosuccinate synthetase (431 aa).

GTP-binding positions include Gly15–Lys21 and Gly43–Thr45. The active-site Proton acceptor is the Asp16. Mg(2+) contacts are provided by Asp16 and Gly43. IMP is bound by residues Asp16 to Lys19, Asn41 to His44, Thr135, Arg149, Asn227, Thr242, and Arg306. His44 (proton donor) is an active-site residue. Val302 to Arg308 contributes to the substrate binding site. GTP contacts are provided by residues Arg308, Lys334–Asp336, and Gly416–Gly418.

The protein belongs to the adenylosuccinate synthetase family. In terms of assembly, homodimer. Requires Mg(2+) as cofactor.

The protein localises to the cytoplasm. The catalysed reaction is IMP + L-aspartate + GTP = N(6)-(1,2-dicarboxyethyl)-AMP + GDP + phosphate + 2 H(+). Its pathway is purine metabolism; AMP biosynthesis via de novo pathway; AMP from IMP: step 1/2. Functionally, plays an important role in the de novo pathway and in the salvage pathway of purine nucleotide biosynthesis. Catalyzes the first committed step in the biosynthesis of AMP from IMP. This chain is Adenylosuccinate synthetase, found in Monosiga brevicollis (Choanoflagellate).